Consider the following 355-residue polypeptide: Protein RecA (355 aa).

67–74 (GPESSGKT) contributes to the ATP binding site. The interval 336–355 (NSAASDYEDNENEEMNNEEF) is disordered. Over residues 341–355 (DYEDNENEEMNNEEF) the composition is skewed to acidic residues.

The protein belongs to the RecA family.

The protein resides in the cytoplasm. In terms of biological role, can catalyze the hydrolysis of ATP in the presence of single-stranded DNA, the ATP-dependent uptake of single-stranded DNA by duplex DNA, and the ATP-dependent hybridization of homologous single-stranded DNAs. It interacts with LexA causing its activation and leading to its autocatalytic cleavage. The polypeptide is Protein RecA (Photorhabdus laumondii subsp. laumondii (strain DSM 15139 / CIP 105565 / TT01) (Photorhabdus luminescens subsp. laumondii)).